We begin with the raw amino-acid sequence, 123 residues long: Large ribosomal subunit protein uL14 (123 aa).

It belongs to the universal ribosomal protein uL14 family. In terms of assembly, part of the 50S ribosomal subunit. Forms a cluster with proteins L3 and L19. In the 70S ribosome, L14 and L19 interact and together make contacts with the 16S rRNA in bridges B5 and B8.

Binds to 23S rRNA. Forms part of two intersubunit bridges in the 70S ribosome. This Actinobacillus succinogenes (strain ATCC 55618 / DSM 22257 / CCUG 43843 / 130Z) protein is Large ribosomal subunit protein uL14.